Here is a 239-residue protein sequence, read N- to C-terminus: Ribosomal RNA small subunit methyltransferase G (239 aa).

S-adenosyl-L-methionine is bound by residues Gly75, Leu80, 126 to 127 (AE), and Arg142.

This sequence belongs to the methyltransferase superfamily. RNA methyltransferase RsmG family.

It is found in the cytoplasm. Its function is as follows. Specifically methylates the N7 position of guanine in position 518 of 16S rRNA. In Streptomyces coelicolor (strain ATCC BAA-471 / A3(2) / M145), this protein is Ribosomal RNA small subunit methyltransferase G.